The sequence spans 72 residues: Translation initiation factor IF-1 2 (72 aa).

The 72-residue stretch at 1-72 (MAKEDAIEVD…KRGRITYRMK (72 aa)) folds into the S1-like domain.

This sequence belongs to the IF-1 family. As to quaternary structure, component of the 30S ribosomal translation pre-initiation complex which assembles on the 30S ribosome in the order IF-2 and IF-3, IF-1 and N-formylmethionyl-tRNA(fMet); mRNA recruitment can occur at any time during PIC assembly.

It is found in the cytoplasm. Its function is as follows. One of the essential components for the initiation of protein synthesis. Stabilizes the binding of IF-2 and IF-3 on the 30S subunit to which N-formylmethionyl-tRNA(fMet) subsequently binds. Helps modulate mRNA selection, yielding the 30S pre-initiation complex (PIC). Upon addition of the 50S ribosomal subunit IF-1, IF-2 and IF-3 are released leaving the mature 70S translation initiation complex. In Nitratidesulfovibrio vulgaris (strain DP4) (Desulfovibrio vulgaris), this protein is Translation initiation factor IF-1 2.